The primary structure comprises 299 residues: Nucleotide-binding protein DIP1313 (299 aa).

22–29 (GLSGAGLS) lines the ATP pocket. 73–76 (DVRS) contributes to the GTP binding site.

Belongs to the RapZ-like family.

Its function is as follows. Displays ATPase and GTPase activities. This is Nucleotide-binding protein DIP1313 from Corynebacterium diphtheriae (strain ATCC 700971 / NCTC 13129 / Biotype gravis).